The following is an 89-amino-acid chain: UPF0175 protein ssl1255 (89 aa).

It belongs to the UPF0175 family.

The sequence is that of UPF0175 protein ssl1255 from Synechocystis sp. (strain ATCC 27184 / PCC 6803 / Kazusa).